A 42-amino-acid chain; its full sequence is Photosystem I reaction center subunit IX (42 aa).

Residues 7-27 form a helical membrane-spanning segment; sequence YLSVAPVLSTLWFGALAGLLI.

The protein belongs to the PsaJ family.

Its subcellular location is the plastid. It is found in the chloroplast thylakoid membrane. In terms of biological role, may help in the organization of the PsaE and PsaF subunits. The chain is Photosystem I reaction center subunit IX from Guizotia abyssinica (Niger).